The chain runs to 147 residues: MAPKAEKKPAEKKPAEEKKAVAEKAPAEKKPKAGKKLPKEGGAAAGDKKKKRVKKSVETYKIYIFKVLKQVHPDIGISSKAMGIMNSFINDIFEKLAQEASRLARYNKKPTITSREIQTAVRLVLPGELAKHAVSEGTKAVTKFTSS.

Over residues 1 to 31 (MAPKAEKKPAEKKPAEEKKAVAEKAPAEKKP) the composition is skewed to basic and acidic residues. The segment at 1–55 (MAPKAEKKPAEKKPAEEKKAVAEKAPAEKKPKAGKKLPKEGGAAAGDKKKKRVKK) is disordered. N6-acetyllysine is present on residues K7, K35, and K36. A Glycyl lysine isopeptide (Lys-Gly) (interchain with G-Cter in ubiquitin) cross-link involves residue K143.

The protein belongs to the histone H2B family. The nucleosome is a histone octamer containing two molecules each of H2A, H2B, H3 and H4 assembled in one H3-H4 heterotetramer and two H2A-H2B heterodimers. The octamer wraps approximately 147 bp of DNA. Can be acetylated to form H2BK6ac, H2BK33ac and H2BK34ac. Post-translationally, monoubiquitinated to form H2BK143ub1; may give a specific tag for epigenetic transcriptional activation.

It is found in the nucleus. The protein resides in the chromosome. In terms of biological role, core component of nucleosome. Nucleosomes wrap and compact DNA into chromatin, limiting DNA accessibility to the cellular machineries which require DNA as a template. Histones thereby play a central role in transcription regulation, DNA repair, DNA replication and chromosomal stability. DNA accessibility is regulated via a complex set of post-translational modifications of histones, also called histone code, and nucleosome remodeling. The chain is Histone H2B (HIS2B) from Gossypium hirsutum (Upland cotton).